We begin with the raw amino-acid sequence, 759 residues long: ARF GTPase-activating protein GIT2 (759 aa).

The region spanning 1–124 (MSKRLRSSEV…AFVHRLPCRD (124 aa)) is the Arf-GAP domain. The C4-type zinc finger occupies 11–34 (CADCSGPDPSWASVNRGTFLCDEC). ANK repeat units follow at residues 132-161 (DLSKQLHSSVRTGNLETCLRLLSLGAQANF), 166-195 (KGNTPLHVASKAGQILQAELLAVYGADPGT), and 199-228 (SGKTPVDYARQGGHHELAERLVEIQYELTD). A disordered region spans residues 379-422 (QHSVESQDNDQPDYDSVASDEDTDLETTASKTNRQKSLDSDLSD). The span at 385–403 (QDNDQPDYDSVASDEDTDL) shows a compositional bias: acidic residues. Phosphoserine is present on residues S394 and S397. T401 is modified (phosphothreonine). Phosphoserine is present on residues S415, S418, and S421. Positions 437–478 (LVASEAKIQQLMKVNNNLSDELRIMQKKLQTLQSENSNLRKQ) form a coiled coil. The span at 480 to 499 (TTNVYQVQTGSEYTDTSNHS) shows a compositional bias: polar residues. 2 disordered regions span residues 480 to 538 (TTNV…EESR) and 554 to 643 (VTSS…TEDV). Phosphotyrosine is present on Y484. Low complexity predominate over residues 555–569 (TSSSSLPSFPSTLSW). A phosphoserine mark is found at S559, S562, and S570. The span at 570–583 (SRDESARRASRLEK) shows a compositional bias: basic and acidic residues. Positions 584-597 (QNSTPESDYDNTPN) are enriched in polar residues. Position 587 is a phosphothreonine (T587). S614 carries the post-translational modification Phosphoserine.

In terms of assembly, may form heterooligomers with GIT1. Directly interacts with protein Piccolo/PCLO. Interacts with PPFIA1 and PPFIA2. Interacts with ARHGEF7. Identified in a complex with ARHGEF6 and BIN2. Interacts with PAK3. Interacts with PXN/paxillin. Interacts with TGFB1I1. Forms a complex with EFNB1 and GRB4/NCK2.

Functionally, GTPase-activating protein for ADP ribosylation factor family members, including ARF1. In Homo sapiens (Human), this protein is ARF GTPase-activating protein GIT2 (GIT2).